We begin with the raw amino-acid sequence, 402 residues long: UPF0261 protein mll9388 (402 aa).

Belongs to the UPF0261 family.

The chain is UPF0261 protein mll9388 from Mesorhizobium japonicum (strain LMG 29417 / CECT 9101 / MAFF 303099) (Mesorhizobium loti (strain MAFF 303099)).